We begin with the raw amino-acid sequence, 956 residues long: Thrombospondin-3 (956 aa).

The signal sequence occupies residues 1–22 (METQELRGALALLLLCFFTSAS). The 171-residue stretch at 23–193 (QDLQVIDLLT…VESMKIILGG (171 aa)) folds into the Laminin G-like domain. 21 disulfide bridges follow: Cys278-Cys289, Cys283-Cys300, Cys303-Cys314, Cys320-Cys332, Cys326-Cys341, Cys344-Cys368, Cys374-Cys388, Cys382-Cys397, Cys400-Cys412, Cys418-Cys432, Cys426-Cys442, Cys444-Cys455, Cys471-Cys478, Cys483-Cys503, Cys519-Cys539, Cys542-Cys562, Cys578-Cys598, Cys601-Cys621, Cys639-Cys659, Cys679-Cys699, and Cys715-Cys936. Asn310 carries N-linked (GlcNAc...) asparagine glycosylation. The EGF-like 1; calcium-binding domain occupies 316–354 (DINECAHADPCFPGSSCINTMPGFHCEACPRGYKGTQVS). An EGF-like 2; calcium-binding domain is found at 370 to 410 (DIDECNDGNNGGCDPNSICTNTVGSFKCGPCRLGFLGNQSQ). Asn407 carries N-linked (GlcNAc...) asparagine glycosylation. The region spanning 414–456 (PARTCHSPAHSPCHIHAHCLFERNGAVSCQCNVGWAGNGNVCG) is the EGF-like 3 domain. TSP type-3 repeat units lie at residues 457-491 (TDTD…NSGQ), 492-527 (EDAD…NKDQ), 528-550 (QNSD…NNDQ), 551-586 (KDTD…NPLQ), 587-609 (TDRD…NPTQ), 610-647 (TDAD…NSSQ), 648-687 (LDSD…NPNQ), and 688-723 (KDSD…EVTL). Disordered stretches follow at residues 518–537 (NCRL…SFGD) and 546–702 (PNND…CEDD). The segment covering 555–568 (GNGEGDACDNDVDG) has biased composition (acidic residues). Acidic residues predominate over residues 612–628 (ADSDLVGDVCDTNEDSD). Asn644 is a glycosylation site (N-linked (GlcNAc...) asparagine). Acidic residues predominate over residues 650 to 667 (SDNDGLGDECDGDDDNDG). One can recognise a TSP C-terminal domain in the interval 727 to 941 (RAYQTVVLDP…LQYRCNDTVP (215 aa)). Asn937 carries an N-linked (GlcNAc...) asparagine glycan.

Belongs to the thrombospondin family. In terms of assembly, oligomer; disulfide-linked.

In terms of biological role, adhesive glycoprotein that mediates cell-to-cell and cell-to-matrix interactions. Can bind to fibrinogen, fibronectin, laminin and type V collagen. The polypeptide is Thrombospondin-3 (THBS3) (Homo sapiens (Human)).